The sequence spans 538 residues: Putative cysteine ligase BshC (538 aa).

Positions 460 to 484 form a coiled coil; that stretch reads KINEQIELLERMLKRNVEKKHEVEL.

The protein belongs to the BshC family.

Its function is as follows. Involved in bacillithiol (BSH) biosynthesis. May catalyze the last step of the pathway, the addition of cysteine to glucosamine malate (GlcN-Mal) to generate BSH. The protein is Putative cysteine ligase BshC of Bacillus thuringiensis subsp. konkukian (strain 97-27).